We begin with the raw amino-acid sequence, 395 residues long: Xylose isomerase (395 aa).

Residues His-54 and Asp-57 contribute to the active site. Mg(2+) is bound by residues Glu-181, Glu-217, His-220, Asp-245, Asp-255, Asp-257, and Asp-293.

The protein belongs to the xylose isomerase family. As to quaternary structure, homotetramer. Mg(2+) serves as cofactor.

It localises to the cytoplasm. It catalyses the reaction alpha-D-xylose = alpha-D-xylulofuranose. The protein is Xylose isomerase of Pseudarthrobacter chlorophenolicus (strain ATCC 700700 / DSM 12829 / CIP 107037 / JCM 12360 / KCTC 9906 / NCIMB 13794 / A6) (Arthrobacter chlorophenolicus).